The following is a 603-amino-acid chain: DNA mismatch repair protein MutL (603 aa).

The segment at Lys361–Pro383 is disordered.

The protein belongs to the DNA mismatch repair MutL/HexB family.

Functionally, this protein is involved in the repair of mismatches in DNA. It is required for dam-dependent methyl-directed DNA mismatch repair. May act as a 'molecular matchmaker', a protein that promotes the formation of a stable complex between two or more DNA-binding proteins in an ATP-dependent manner without itself being part of a final effector complex. The protein is DNA mismatch repair protein MutL of Listeria monocytogenes serotype 4b (strain CLIP80459).